We begin with the raw amino-acid sequence, 130 residues long: uncharacterized protein (130 aa).

Positions 23-130 are disordered; it reads SHLRLLPTAN…GAHQLSSPSS (108 aa). The segment covering 30–45 has biased composition (polar residues); it reads TANSPSGSNQPTNPNR.

This is an uncharacterized protein from Homo sapiens (Human).